The following is a 610-amino-acid chain: Membrane protein insertase YidC (610 aa).

The helical transmembrane segment at 7 to 27 (FFITIALSILILALWQVFYLG) threads the bilayer. A disordered region spans residues 36 to 82 (QARIEEQQRQAQQAAQNRQASSSTGDTPQMPANPDSIPGQGDTKAAG). Over residues 44-55 (RQAQQAAQNRQA) the composition is skewed to low complexity. A run of 5 helical transmembrane segments spans residues 358–378 (FDLLIDWGWFYFITKPMFYLI), 387–407 (NFGVAILVVTVLLKALFFPLA), 458–478 (WPVLVQIPVFFALYKVLYVTI), 510–530 (TVPHFLMIGVWPIIMGITMFL), and 546–566 (IFTWMPIIFTFMLASFPAGLV).

The protein belongs to the OXA1/ALB3/YidC family. Type 1 subfamily. In terms of assembly, interacts with the Sec translocase complex via SecD. Specifically interacts with transmembrane segments of nascent integral membrane proteins during membrane integration.

The protein localises to the cell inner membrane. Its function is as follows. Required for the insertion and/or proper folding and/or complex formation of integral membrane proteins into the membrane. Involved in integration of membrane proteins that insert both dependently and independently of the Sec translocase complex, as well as at least some lipoproteins. Aids folding of multispanning membrane proteins. The chain is Membrane protein insertase YidC from Brucella suis biovar 1 (strain 1330).